The sequence spans 339 residues: Serpentine receptor class alpha-20 (339 aa).

Transmembrane regions (helical) follow at residues Val-30–Ile-50, Leu-113–Phe-132, Val-151–Leu-171, Phe-199–Val-219, Cys-249–Ile-269, and Ile-284–Phe-304.

The protein belongs to the nematode receptor-like protein sra family.

It localises to the membrane. The protein is Serpentine receptor class alpha-20 (sra-20) of Caenorhabditis elegans.